The chain runs to 321 residues: Replication factor C small subunit (321 aa).

Position 46 to 53 (46 to 53 (GPAGVGKT)) interacts with ATP.

It belongs to the activator 1 small subunits family. RfcS subfamily. In terms of assembly, heterohexamer composed of four small subunits (RfcS) and two large subunits (RfcL).

Part of the RFC clamp loader complex which loads the PCNA sliding clamp onto DNA. The complex possesses DNA-dependent ATPase activity which is further stimulated by PCNA. In conjunction with PCNA stimulates DNA synthesis by PolB, relieving inhibition by replication protein A (RPA). This is Replication factor C small subunit (rfcS) from Methanothermobacter thermautotrophicus (strain ATCC 29096 / DSM 1053 / JCM 10044 / NBRC 100330 / Delta H) (Methanobacterium thermoautotrophicum).